An 881-amino-acid polypeptide reads, in one-letter code: DNA mismatch repair protein MutS (881 aa).

ATP is bound at residue 632–639 (GPNMGGKS).

It belongs to the DNA mismatch repair MutS family.

Its function is as follows. This protein is involved in the repair of mismatches in DNA. It is possible that it carries out the mismatch recognition step. This protein has a weak ATPase activity. The protein is DNA mismatch repair protein MutS of Acinetobacter baylyi (strain ATCC 33305 / BD413 / ADP1).